A 457-amino-acid polypeptide reads, in one-letter code: Methylenetetrahydrofolate--tRNA-(uracil-5-)-methyltransferase TrmFO (457 aa).

12-17 (GGGLAG) provides a ligand contact to FAD.

It belongs to the MnmG family. TrmFO subfamily. It depends on FAD as a cofactor.

The protein localises to the cytoplasm. The catalysed reaction is uridine(54) in tRNA + (6R)-5,10-methylene-5,6,7,8-tetrahydrofolate + NADH + H(+) = 5-methyluridine(54) in tRNA + (6S)-5,6,7,8-tetrahydrofolate + NAD(+). It carries out the reaction uridine(54) in tRNA + (6R)-5,10-methylene-5,6,7,8-tetrahydrofolate + NADPH + H(+) = 5-methyluridine(54) in tRNA + (6S)-5,6,7,8-tetrahydrofolate + NADP(+). Its function is as follows. Catalyzes the folate-dependent formation of 5-methyl-uridine at position 54 (M-5-U54) in all tRNAs. The chain is Methylenetetrahydrofolate--tRNA-(uracil-5-)-methyltransferase TrmFO from Myxococcus xanthus (strain DK1622).